A 237-amino-acid polypeptide reads, in one-letter code: Phosphoadenosine 5'-phosphosulfate reductase (237 aa).

Cysteine 231 serves as the catalytic Nucleophile; cysteine thiosulfonate intermediate.

The protein belongs to the PAPS reductase family. CysH subfamily.

Its subcellular location is the cytoplasm. The catalysed reaction is [thioredoxin]-disulfide + sulfite + adenosine 3',5'-bisphosphate + 2 H(+) = [thioredoxin]-dithiol + 3'-phosphoadenylyl sulfate. It functions in the pathway sulfur metabolism; hydrogen sulfide biosynthesis; sulfite from sulfate: step 3/3. In terms of biological role, catalyzes the formation of sulfite from phosphoadenosine 5'-phosphosulfate (PAPS) using thioredoxin as an electron donor. The protein is Phosphoadenosine 5'-phosphosulfate reductase of Xylella fastidiosa (strain M12).